A 259-amino-acid chain; its full sequence is Polycomb group RING finger protein 1 (259 aa).

A2 carries the post-translational modification N-acetylalanine. S3 bears the Phosphoserine mark. A Glycyl lysine isopeptide (Lys-Gly) (interchain with G-Cter in SUMO2) cross-link involves residue K24. An RING-type zinc finger spans residues 47-86; it reads CCLCAGYFVDATTITECLHTFCKSCIVKYLQTSKYCPMCN. Residues 86–247 are necessary for repressor activity; sequence NIKIHETQPL…LSHWFGKPSP (162 aa). Residue K88 forms a Glycyl lysine isopeptide (Lys-Gly) (interchain with G-Cter in SUMO2) linkage. The interval 150-255 is required for the interaction with the KDM2B-SKP1 heterodimeric complex; the sequence is LPFSSFDHSK…SPLLLQYSVK (106 aa). Residues 167–255 are RING-finger and WD40-associated ubiquitin-like domain (RAWUL); sufficient for interaction with BCOR and BCORL1; sequence EQLSLCLERL…SPLLLQYSVK (89 aa).

As to quaternary structure, interacts with BCORL1, forming heterodimers. The PCGF1-BCORL1 heterodimeric complex interacts with the KDM2B-SKP1 heterodimeric complex to form a homotetrameric polycomb repression complex 1 (PRC1.1). Component of the repressive BCOR complex containing a Polycomb group subcomplex at least composed of RYBP, RING1 and RNF2/RING2. Specifically interacts with BCOR, RING1 and RNF2/RING2. Component of a PRC1-like complex. Interacts with CBX6, CBX7 and CBX8. Interacts with DPPA4, NANOG, POU5F1 and RYBP.

Its subcellular location is the nucleus. Functionally, component of the Polycomb group (PcG) multiprotein BCOR complex, a complex required to maintain the transcriptionally repressive state of some genes, such as BCL6 and the cyclin-dependent kinase inhibitor, CDKN1A. Transcriptional repressor that may be targeted to the DNA by BCL6; this transcription repressor activity may be related to PKC signaling pathway. Represses CDKN1A expression by binding to its promoter, and this repression is dependent on the retinoic acid response element (RARE element). Promotes cell cycle progression and enhances cell proliferation as well. May have a positive role in tumor cell growth by down-regulating CDKN1A. Component of a Polycomb group (PcG) multiprotein PRC1-like complex, a complex class required to maintain the transcriptionally repressive state of many genes, including Hox genes, throughout development. PcG PRC1 complex acts via chromatin remodeling and modification of histones; it mediates monoubiquitination of histone H2A 'Lys-119', rendering chromatin heritably changed in its expressibility. Within the PRC1-like complex, regulates RNF2 ubiquitin ligase activity. Regulates the expression of DPPA4 and NANOG in the NT2 embryonic carcinoma cells. The chain is Polycomb group RING finger protein 1 (PCGF1) from Bos taurus (Bovine).